Consider the following 126-residue polypeptide: Fluoride-specific ion channel FluC 2 (126 aa).

The next 4 helical transmembrane spans lie at 5 to 25 (TALT…GSVL), 44 to 64 (GTLT…GLAL), 68 to 88 (AALL…TWML), and 99 to 119 (MVSA…AALL). Residues G78 and T81 each coordinate Na(+).

The protein belongs to the fluoride channel Fluc/FEX (TC 1.A.43) family.

The protein resides in the cell membrane. It carries out the reaction fluoride(in) = fluoride(out). With respect to regulation, na(+) is not transported, but it plays an essential structural role and its presence is essential for fluoride channel function. Fluoride-specific ion channel. Important for reducing fluoride concentration in the cell, thus reducing its toxicity. The chain is Fluoride-specific ion channel FluC 2 from Mycobacterium bovis (strain ATCC BAA-935 / AF2122/97).